The chain runs to 128 residues: Large ribosomal subunit protein bL12 (128 aa).

This sequence belongs to the bacterial ribosomal protein bL12 family. In terms of assembly, homodimer. Part of the ribosomal stalk of the 50S ribosomal subunit. Forms a multimeric L10(L12)X complex, where L10 forms an elongated spine to which 2 to 4 L12 dimers bind in a sequential fashion. Binds GTP-bound translation factors.

Functionally, forms part of the ribosomal stalk which helps the ribosome interact with GTP-bound translation factors. Is thus essential for accurate translation. The sequence is that of Large ribosomal subunit protein bL12 from Halorhodospira halophila (strain DSM 244 / SL1) (Ectothiorhodospira halophila (strain DSM 244 / SL1)).